A 125-amino-acid chain; its full sequence is Small ribosomal subunit protein uS13 (125 aa).

This sequence belongs to the universal ribosomal protein uS13 family. Part of the 30S ribosomal subunit. Forms a loose heterodimer with protein S19. Forms two bridges to the 50S subunit in the 70S ribosome.

Its function is as follows. Located at the top of the head of the 30S subunit, it contacts several helices of the 16S rRNA. In the 70S ribosome it contacts the 23S rRNA (bridge B1a) and protein L5 of the 50S subunit (bridge B1b), connecting the 2 subunits; these bridges are implicated in subunit movement. Contacts the tRNAs in the A and P-sites. This is Small ribosomal subunit protein uS13 from Rickettsia akari (strain Hartford).